A 374-amino-acid chain; its full sequence is tRNA-specific 2-thiouridylase MnmA (374 aa).

ATP is bound by residues 12–19 (GMSGGVDS) and Met-38. The tract at residues 98 to 100 (NPD) is interaction with target base in tRNA. Cys-103 functions as the Nucleophile in the catalytic mechanism. Cys-103 and Cys-207 are oxidised to a cystine. Gly-128 serves as a coordination point for ATP. An interaction with tRNA region spans residues 157 to 159 (KDQ). Cys-207 serves as the catalytic Cysteine persulfide intermediate. An interaction with tRNA region spans residues 321 to 322 (RY).

This sequence belongs to the MnmA/TRMU family.

Its subcellular location is the cytoplasm. It carries out the reaction S-sulfanyl-L-cysteinyl-[protein] + uridine(34) in tRNA + AH2 + ATP = 2-thiouridine(34) in tRNA + L-cysteinyl-[protein] + A + AMP + diphosphate + H(+). Functionally, catalyzes the 2-thiolation of uridine at the wobble position (U34) of tRNA, leading to the formation of s(2)U34. The polypeptide is tRNA-specific 2-thiouridylase MnmA (Aliivibrio fischeri (strain ATCC 700601 / ES114) (Vibrio fischeri)).